Reading from the N-terminus, the 428-residue chain is Probable dual-specificity RNA methyltransferase RlmN 2 (428 aa).

The active-site Proton acceptor is the E142. A Radical SAM core domain is found at 148-414 (FAGRATACVS…STVRQRRGID (267 aa)). C155 and C419 are disulfide-bonded. [4Fe-4S] cluster contacts are provided by C162, C166, and C169. Residues 207–228 (MRDPSPGREAGEKSRDEADRHR) are compositionally biased toward basic and acidic residues. The tract at residues 207–232 (MRDPSPGREAGEKSRDEADRHRAPPT) is disordered. S-adenosyl-L-methionine contacts are provided by residues 244 to 245 (GE), S276, 299 to 301 (SLH), and N375. C419 (S-methylcysteine intermediate) is an active-site residue.

The protein belongs to the radical SAM superfamily. RlmN family. Requires [4Fe-4S] cluster as cofactor.

Its subcellular location is the cytoplasm. The catalysed reaction is adenosine(2503) in 23S rRNA + 2 reduced [2Fe-2S]-[ferredoxin] + 2 S-adenosyl-L-methionine = 2-methyladenosine(2503) in 23S rRNA + 5'-deoxyadenosine + L-methionine + 2 oxidized [2Fe-2S]-[ferredoxin] + S-adenosyl-L-homocysteine. It catalyses the reaction adenosine(37) in tRNA + 2 reduced [2Fe-2S]-[ferredoxin] + 2 S-adenosyl-L-methionine = 2-methyladenosine(37) in tRNA + 5'-deoxyadenosine + L-methionine + 2 oxidized [2Fe-2S]-[ferredoxin] + S-adenosyl-L-homocysteine. Specifically methylates position 2 of adenine 2503 in 23S rRNA and position 2 of adenine 37 in tRNAs. In Opitutus terrae (strain DSM 11246 / JCM 15787 / PB90-1), this protein is Probable dual-specificity RNA methyltransferase RlmN 2.